Reading from the N-terminus, the 317-residue chain is Transaldolase (317 aa).

K132 serves as the catalytic Schiff-base intermediate with substrate.

It belongs to the transaldolase family. Type 1 subfamily. As to quaternary structure, homodimer.

The protein resides in the cytoplasm. It carries out the reaction D-sedoheptulose 7-phosphate + D-glyceraldehyde 3-phosphate = D-erythrose 4-phosphate + beta-D-fructose 6-phosphate. The protein operates within carbohydrate degradation; pentose phosphate pathway; D-glyceraldehyde 3-phosphate and beta-D-fructose 6-phosphate from D-ribose 5-phosphate and D-xylulose 5-phosphate (non-oxidative stage): step 2/3. In terms of biological role, transaldolase is important for the balance of metabolites in the pentose-phosphate pathway. The chain is Transaldolase from Haemophilus influenzae (strain PittGG).